A 229-amino-acid polypeptide reads, in one-letter code: Cytochrome c oxidase subunit 2 (229 aa).

The Mitochondrial intermembrane segment spans residues 1-26 (MANWTQLGLQDASSPLMEELIYFHDY). Residues 27–48 (TLIILTLITILVFYGLASLLFS) form a helical membrane-spanning segment. The Mitochondrial matrix portion of the chain corresponds to 49-62 (SNTNRFFLEGQGLE). Residues 63 to 82 (TVWTIIPAVILIFIALPSLQ) traverse the membrane as a helical segment. Topologically, residues 83–229 (LLYLMDEVNN…ETWVSNFITE (147 aa)) are mitochondrial intermembrane. 6 residues coordinate Cu cation: H161, C196, E198, C200, H204, and M207. E198 serves as a coordination point for Mg(2+).

This sequence belongs to the cytochrome c oxidase subunit 2 family. In terms of assembly, component of the cytochrome c oxidase (complex IV, CIV), a multisubunit enzyme composed of a catalytic core of 3 subunits and several supernumerary subunits. The complex exists as a monomer or a dimer and forms supercomplexes (SCs) in the inner mitochondrial membrane with ubiquinol-cytochrome c oxidoreductase (cytochrome b-c1 complex, complex III, CIII). Cu cation serves as cofactor.

It is found in the mitochondrion inner membrane. It catalyses the reaction 4 Fe(II)-[cytochrome c] + O2 + 8 H(+)(in) = 4 Fe(III)-[cytochrome c] + 2 H2O + 4 H(+)(out). Its function is as follows. Component of the cytochrome c oxidase, the last enzyme in the mitochondrial electron transport chain which drives oxidative phosphorylation. The respiratory chain contains 3 multisubunit complexes succinate dehydrogenase (complex II, CII), ubiquinol-cytochrome c oxidoreductase (cytochrome b-c1 complex, complex III, CIII) and cytochrome c oxidase (complex IV, CIV), that cooperate to transfer electrons derived from NADH and succinate to molecular oxygen, creating an electrochemical gradient over the inner membrane that drives transmembrane transport and the ATP synthase. Cytochrome c oxidase is the component of the respiratory chain that catalyzes the reduction of oxygen to water. Electrons originating from reduced cytochrome c in the intermembrane space (IMS) are transferred via the dinuclear copper A center (CU(A)) of subunit 2 and heme A of subunit 1 to the active site in subunit 1, a binuclear center (BNC) formed by heme A3 and copper B (CU(B)). The BNC reduces molecular oxygen to 2 water molecules using 4 electrons from cytochrome c in the IMS and 4 protons from the mitochondrial matrix. The sequence is that of Cytochrome c oxidase subunit 2 (COII) from Patiria pectinifera (Starfish).